The sequence spans 192 residues: Adenine phosphoribosyltransferase (192 aa).

It belongs to the purine/pyrimidine phosphoribosyltransferase family. Homodimer.

Its subcellular location is the cytoplasm. It catalyses the reaction AMP + diphosphate = 5-phospho-alpha-D-ribose 1-diphosphate + adenine. It functions in the pathway purine metabolism; AMP biosynthesis via salvage pathway; AMP from adenine: step 1/1. Catalyzes a salvage reaction resulting in the formation of AMP, that is energically less costly than de novo synthesis. This is Adenine phosphoribosyltransferase from Corynebacterium efficiens (strain DSM 44549 / YS-314 / AJ 12310 / JCM 11189 / NBRC 100395).